A 677-amino-acid chain; its full sequence is DNA ligase (677 aa).

NAD(+) contacts are provided by residues 38 to 42 (DYDFD), 87 to 88 (SL), and glutamate 121. Lysine 123 functions as the N6-AMP-lysine intermediate in the catalytic mechanism. Arginine 144, glutamate 187, lysine 300, and lysine 324 together coordinate NAD(+). Positions 418, 421, 436, and 442 each coordinate Zn(2+). Residues 601–677 (LINSNFEGLS…ISEEEFEAML (77 aa)) form the BRCT domain.

Belongs to the NAD-dependent DNA ligase family. LigA subfamily. Mg(2+) is required as a cofactor. Mn(2+) serves as cofactor.

It catalyses the reaction NAD(+) + (deoxyribonucleotide)n-3'-hydroxyl + 5'-phospho-(deoxyribonucleotide)m = (deoxyribonucleotide)n+m + AMP + beta-nicotinamide D-nucleotide.. DNA ligase that catalyzes the formation of phosphodiester linkages between 5'-phosphoryl and 3'-hydroxyl groups in double-stranded DNA using NAD as a coenzyme and as the energy source for the reaction. It is essential for DNA replication and repair of damaged DNA. The protein is DNA ligase of Chlorobium luteolum (strain DSM 273 / BCRC 81028 / 2530) (Pelodictyon luteolum).